Here is a 474-residue protein sequence, read N- to C-terminus: Sestrin homolog (474 aa).

Belongs to the sestrin family.

It is found in the nucleus. The protein resides in the cytoplasm. May function as a negative feedback regulator of TOR function. This chain is Sestrin homolog, found in Caenorhabditis elegans.